Consider the following 274-residue polypeptide: NADPH-dependent 7-cyano-7-deazaguanine reductase (274 aa).

Position 80-82 (80-82) interacts with substrate; it reads VES. Residue 82–83 participates in NADPH binding; it reads SK. The Thioimide intermediate role is filled by Cys-181. Asp-188 (proton donor) is an active-site residue. 220–221 lines the substrate pocket; the sequence is HE. Residue 249–250 coordinates NADPH; sequence RG.

This sequence belongs to the GTP cyclohydrolase I family. QueF type 2 subfamily. In terms of assembly, homodimer.

Its subcellular location is the cytoplasm. The enzyme catalyses 7-aminomethyl-7-carbaguanine + 2 NADP(+) = 7-cyano-7-deazaguanine + 2 NADPH + 3 H(+). It functions in the pathway tRNA modification; tRNA-queuosine biosynthesis. In terms of biological role, catalyzes the NADPH-dependent reduction of 7-cyano-7-deazaguanine (preQ0) to 7-aminomethyl-7-deazaguanine (preQ1). This Burkholderia multivorans (strain ATCC 17616 / 249) protein is NADPH-dependent 7-cyano-7-deazaguanine reductase.